The sequence spans 430 residues: Acetyl-CoA acetyltransferase FG05087, mitochondrial (430 aa).

A mitochondrion-targeting transit peptide spans methionine 1–arginine 32. The Acyl-thioester intermediate role is filled by cysteine 122. K(+) is bound at residue tyrosine 217. CoA is bound at residue lysine 260. Alanine 278 lines the K(+) pocket. Serine 282 is a binding site for CoA. Active-site proton acceptor residues include histidine 385 and cysteine 413. Asparagine 414 is a binding site for chloride.

It belongs to the thiolase-like superfamily. Thiolase family. In terms of assembly, homotetramer. It depends on K(+) as a cofactor.

It localises to the mitochondrion. The catalysed reaction is 2 acetyl-CoA = acetoacetyl-CoA + CoA. Mitochondrial acetyl-CoA acetyltransferase that catalyzes both the formation and degradation of acetoacetyl-CoA. Seems not to be involved in ergosterol biosynthesis. Plays an important role in growth, morphogenesis and maintaining mitochondrial function including the response to oxidative stresses. The polypeptide is Acetyl-CoA acetyltransferase FG05087, mitochondrial (Gibberella zeae (strain ATCC MYA-4620 / CBS 123657 / FGSC 9075 / NRRL 31084 / PH-1) (Wheat head blight fungus)).